A 119-amino-acid polypeptide reads, in one-letter code: uncharacterized protein (119 aa).

A disordered region spans residues L55 to N119. Residues L81–T92 show a composition bias toward polar residues.

This is an uncharacterized protein from Saccharomyces cerevisiae (strain ATCC 204508 / S288c) (Baker's yeast).